Here is a 231-residue protein sequence, read N- to C-terminus: Modulator of macroautophagy TMEM150B-B (231 aa).

M1 is a topological domain (cytoplasmic). A helical membrane pass occupies residues W2–V22. Residues Y23–Q50 lie on the Extracellular side of the membrane. Residues N29 and N33 are each glycosylated (N-linked (GlcNAc...) asparagine). A helical membrane pass occupies residues S51–I71. Residues R72–S83 are Cytoplasmic-facing. The helical transmembrane segment at V84–G104 threads the bilayer. Residues N105 to H115 are Extracellular-facing. A helical membrane pass occupies residues L116–L136. Topologically, residues T137–G150 are cytoplasmic. A helical membrane pass occupies residues P151 to L171. Residues K172–E183 lie on the Extracellular side of the membrane. The helical transmembrane segment at W184 to L204 threads the bilayer. Residues D205–I231 lie on the Cytoplasmic side of the membrane.

This sequence belongs to the DRAM/TMEM150 family.

The protein localises to the cell membrane. It localises to the endosome membrane. The protein resides in the cytoplasmic vesicle. Its subcellular location is the autophagosome membrane. Its function is as follows. Modulator of macroautophagy that causes accumulation of autophagosomes under basal conditions and enhances autophagic flux. Represses cell death and promotes long-term clonogenic survival of cells grown in the absence of glucose in a macroautophagy-independent manner. May have some role in extracellular matrix engulfment or growth factor receptor recycling, both of which can modulate cell survival. This Xenopus laevis (African clawed frog) protein is Modulator of macroautophagy TMEM150B-B.